The sequence spans 508 residues: Maturase K (508 aa).

The protein belongs to the intron maturase 2 family. MatK subfamily.

Its subcellular location is the plastid. The protein resides in the chloroplast. Its function is as follows. Usually encoded in the trnK tRNA gene intron. Probably assists in splicing its own and other chloroplast group II introns. In Ranunculus lingua (Greater spearwort), this protein is Maturase K.